The primary structure comprises 300 residues: Dihydroorotate dehydrogenase B (NAD(+)), catalytic subunit (300 aa).

Residues Ser20 and 44–45 each bind FMN; that span reads KG. Substrate-binding positions include Lys44 and 68 to 72; that span reads NSVGL. FMN is bound by residues Asn98 and Asn124. Substrate is bound at residue Asn124. Catalysis depends on Cys127, which acts as the Nucleophile. Residues Lys162 and Ile188 each coordinate FMN. 189-190 is a substrate binding site; sequence NT. FMN contacts are provided by residues Gly214, 240–241, and 262–263; these read GG and GT.

The protein belongs to the dihydroorotate dehydrogenase family. Type 1 subfamily. In terms of assembly, heterotetramer of 2 PyrK and 2 PyrD type B subunits. FMN is required as a cofactor.

The protein resides in the cytoplasm. It catalyses the reaction (S)-dihydroorotate + NAD(+) = orotate + NADH + H(+). The protein operates within pyrimidine metabolism; UMP biosynthesis via de novo pathway; orotate from (S)-dihydroorotate (NAD(+) route): step 1/1. Its function is as follows. Catalyzes the conversion of dihydroorotate to orotate with NAD(+) as electron acceptor. In Caldicellulosiruptor saccharolyticus (strain ATCC 43494 / DSM 8903 / Tp8T 6331), this protein is Dihydroorotate dehydrogenase B (NAD(+)), catalytic subunit (pyrD).